The primary structure comprises 384 residues: Sialyltransferase-like protein 3 (384 aa).

Residues M1–H5 are Cytoplasmic-facing. The helical; Signal-anchor for type II membrane protein transmembrane segment at W6–F26 threads the bilayer. Residues R27 to R384 lie on the Lumenal side of the membrane. N-linked (GlcNAc...) asparagine glycosylation occurs at N241.

It belongs to the glycosyltransferase 29 family.

Its subcellular location is the golgi apparatus membrane. Functionally, possesses sialyltransferase-like activity in vitro. Transfers sialic acid to the glycoprotein asialofetuin. The transferred sialic acid is linked to galactose of Gal-beta-1,3-GalNAc through alpha-2,6-linkage. This Oryza sativa subsp. japonica (Rice) protein is Sialyltransferase-like protein 3.